A 614-amino-acid chain; its full sequence is Major facilitator superfamily domain-containing protein 6-like protein B (614 aa).

2 helical membrane-spanning segments follow: residues 41-61 (LGLGASLVGIIIGFKHAVHLL) and 78-98 (FFIMASLLLSAGAGGLFAFYP). Polar residues predominate over residues 177–191 (HQRFTDQFPSSSPLT). The tract at residues 177–243 (HQRFTDQFPS…PFATHPNVSH (67 aa)) is disordered. A compositionally biased stretch (low complexity) spans 205–227 (GSGKAQKANSSKSSASNSKQRSS). 9 helical membrane-spanning segments follow: residues 270–290 (IFLIVLAMVIIWEILAAPLEW), 312–332 (LWIWGYLGASMGSIFITFLID), 345–365 (VSFHFFCYGGFLISTFFLSTL), 393–413 (IVLTALTVFVLGAVGSTIQNF), 425–445 (ELYMGLSIAAGLLSELALYFF), 457–477 (WMVVLGLLSLGIQFLYYSFLW), 480–500 (WSVVAIQILNAFSSGVIWWAI), 520–540 (LRWLAYGCGSSAGSFASGFII), and 546–566 (AVLYQACCITLLTWIVIFLLV).

It belongs to the major facilitator superfamily. MFSD6 family.

Its subcellular location is the membrane. In Xenopus laevis (African clawed frog), this protein is Major facilitator superfamily domain-containing protein 6-like protein B (mfsd6l-b).